The chain runs to 443 residues: Ribosomal protein uS12 methylthiotransferase RimO (443 aa).

The 116-residue stretch at 1–116 (MKFHLISLGC…IAEYVGKLIA (116 aa)) folds into the MTTase N-terminal domain. Positions 10, 45, 79, 154, 158, and 161 each coordinate [4Fe-4S] cluster. In terms of domain architecture, Radical SAM core spans 140-370 (STPFFRAWVK…LELQQELSTE (231 aa)). Positions 373–441 (KKYVGTVQKV…QYDLVGGVVS (69 aa)) constitute a TRAM domain.

Belongs to the methylthiotransferase family. RimO subfamily. It depends on [4Fe-4S] cluster as a cofactor.

It localises to the cytoplasm. It carries out the reaction L-aspartate(89)-[ribosomal protein uS12]-hydrogen + (sulfur carrier)-SH + AH2 + 2 S-adenosyl-L-methionine = 3-methylsulfanyl-L-aspartate(89)-[ribosomal protein uS12]-hydrogen + (sulfur carrier)-H + 5'-deoxyadenosine + L-methionine + A + S-adenosyl-L-homocysteine + 2 H(+). In terms of biological role, catalyzes the methylthiolation of an aspartic acid residue of ribosomal protein uS12. The sequence is that of Ribosomal protein uS12 methylthiotransferase RimO from Desulfotalea psychrophila (strain LSv54 / DSM 12343).